Here is a 290-residue protein sequence, read N- to C-terminus: uncharacterized protein (290 aa).

This is an uncharacterized protein from Psittacid herpesvirus 1 (isolate Amazon parrot/-/97-0001/1997) (PsHV-1).